Here is a 463-residue protein sequence, read N- to C-terminus: uncharacterized protein (463 aa).

A signal peptide spans 1-23 (MKFSSIPIASTLLSLLVASSVTA). 2 disordered regions span residues 174-200 (STYNSTTSSYHNSTSTPPPTITSTKAS) and 239-258 (GASTVTSTQPSTVTSTQRKN).

The protein belongs to the but2 family.

It localises to the cytoplasm. This is an uncharacterized protein from Schizosaccharomyces pombe (strain 972 / ATCC 24843) (Fission yeast).